A 171-amino-acid chain; its full sequence is NADH-quinone oxidoreductase subunit I 1 (171 aa).

4Fe-4S ferredoxin-type domains follow at residues 39–71 and 81–110; these read IVLT…LTKA and EHFR…LTPD. Residues cysteine 51, cysteine 54, cysteine 57, cysteine 61, cysteine 90, cysteine 93, cysteine 96, and cysteine 100 each contribute to the [4Fe-4S] cluster site.

Belongs to the complex I 23 kDa subunit family. NDH-1 is composed of 14 different subunits. Subunits NuoA, H, J, K, L, M, N constitute the membrane sector of the complex. Requires [4Fe-4S] cluster as cofactor.

The protein resides in the cell inner membrane. The enzyme catalyses a quinone + NADH + 5 H(+)(in) = a quinol + NAD(+) + 4 H(+)(out). Its function is as follows. NDH-1 shuttles electrons from NADH, via FMN and iron-sulfur (Fe-S) centers, to quinones in the respiratory chain. The immediate electron acceptor for the enzyme in this species is believed to be ubiquinone. Couples the redox reaction to proton translocation (for every two electrons transferred, four hydrogen ions are translocated across the cytoplasmic membrane), and thus conserves the redox energy in a proton gradient. The protein is NADH-quinone oxidoreductase subunit I 1 of Rhodopseudomonas palustris (strain BisB5).